The chain runs to 395 residues: Acetate kinase 2 (395 aa).

A Mg(2+)-binding site is contributed by N8. Residue K15 participates in ATP binding. R89 contacts substrate. D146 functions as the Proton donor/acceptor in the catalytic mechanism. ATP-binding positions include 206-210 (HIGNG), 283-285 (DMR), and 331-335 (GVGEN). E383 contributes to the Mg(2+) binding site.

The protein belongs to the acetokinase family. Homodimer. It depends on Mg(2+) as a cofactor. Mn(2+) is required as a cofactor.

It localises to the cytoplasm. The catalysed reaction is acetate + ATP = acetyl phosphate + ADP. It functions in the pathway metabolic intermediate biosynthesis; acetyl-CoA biosynthesis; acetyl-CoA from acetate: step 1/2. Catalyzes the formation of acetyl phosphate from acetate and ATP. Can also catalyze the reverse reaction. The polypeptide is Acetate kinase 2 (Lactococcus lactis subsp. lactis (strain IL1403) (Streptococcus lactis)).